Here is a 612-residue protein sequence, read N- to C-terminus: Dihydroxy-acid dehydratase (612 aa).

Position 81 (aspartate 81) interacts with Mg(2+). Cysteine 122 contacts [2Fe-2S] cluster. Mg(2+) contacts are provided by aspartate 123 and lysine 124. Lysine 124 is subject to N6-carboxylysine. Residue cysteine 193 participates in [2Fe-2S] cluster binding. Glutamate 489 contacts Mg(2+). The Proton acceptor role is filled by serine 515.

This sequence belongs to the IlvD/Edd family. As to quaternary structure, homodimer. Requires [2Fe-2S] cluster as cofactor. It depends on Mg(2+) as a cofactor.

The enzyme catalyses (2R)-2,3-dihydroxy-3-methylbutanoate = 3-methyl-2-oxobutanoate + H2O. It catalyses the reaction (2R,3R)-2,3-dihydroxy-3-methylpentanoate = (S)-3-methyl-2-oxopentanoate + H2O. The protein operates within amino-acid biosynthesis; L-isoleucine biosynthesis; L-isoleucine from 2-oxobutanoate: step 3/4. Its pathway is amino-acid biosynthesis; L-valine biosynthesis; L-valine from pyruvate: step 3/4. Its function is as follows. Functions in the biosynthesis of branched-chain amino acids. Catalyzes the dehydration of (2R,3R)-2,3-dihydroxy-3-methylpentanoate (2,3-dihydroxy-3-methylvalerate) into 2-oxo-3-methylpentanoate (2-oxo-3-methylvalerate) and of (2R)-2,3-dihydroxy-3-methylbutanoate (2,3-dihydroxyisovalerate) into 2-oxo-3-methylbutanoate (2-oxoisovalerate), the penultimate precursor to L-isoleucine and L-valine, respectively. The polypeptide is Dihydroxy-acid dehydratase (Xanthomonas oryzae pv. oryzae (strain MAFF 311018)).